A 192-amino-acid polypeptide reads, in one-letter code: MNEKIMSDQKKIEEAVYQLLEALGEDPNREGLLDTPKRVAKMYQEMFAGLNEDPKDQFTAVFSEEHEDVVLVKDIPFYSMCEHHLVPFHGLAHVAYIPSDGCVTGLSKLARAVEVVSKRPQLQERLTVQIANALEEALKPKGVLVMIEAEHMCMTMRGIKKPGSKTVTRVVRGICQSDKETRQEIIAMIHHN.

Positions 81, 84, and 153 each coordinate Zn(2+).

This sequence belongs to the GTP cyclohydrolase I family. As to quaternary structure, toroid-shaped homodecamer, composed of two pentamers of five dimers.

It catalyses the reaction GTP + H2O = 7,8-dihydroneopterin 3'-triphosphate + formate + H(+). The protein operates within cofactor biosynthesis; 7,8-dihydroneopterin triphosphate biosynthesis; 7,8-dihydroneopterin triphosphate from GTP: step 1/1. The protein is GTP cyclohydrolase 1 of Streptococcus mutans serotype c (strain ATCC 700610 / UA159).